Here is a 209-residue protein sequence, read N- to C-terminus: Orotate phosphoribosyltransferase (209 aa).

Residues arginine 96, lysine 100, histidine 102, and 122 to 130 (EDLISTGGS) each bind 5-phospho-alpha-D-ribose 1-diphosphate. Residue serine 126 coordinates orotate.

Belongs to the purine/pyrimidine phosphoribosyltransferase family. PyrE subfamily. As to quaternary structure, homodimer. Mg(2+) is required as a cofactor.

The enzyme catalyses orotidine 5'-phosphate + diphosphate = orotate + 5-phospho-alpha-D-ribose 1-diphosphate. Its pathway is pyrimidine metabolism; UMP biosynthesis via de novo pathway; UMP from orotate: step 1/2. Catalyzes the transfer of a ribosyl phosphate group from 5-phosphoribose 1-diphosphate to orotate, leading to the formation of orotidine monophosphate (OMP). This Streptococcus mutans serotype c (strain ATCC 700610 / UA159) protein is Orotate phosphoribosyltransferase.